The chain runs to 309 residues: Pantothenate kinase (309 aa).

An ATP-binding site is contributed by 92-99 (GSVAVGKS).

This sequence belongs to the prokaryotic pantothenate kinase family.

Its subcellular location is the cytoplasm. The catalysed reaction is (R)-pantothenate + ATP = (R)-4'-phosphopantothenate + ADP + H(+). It participates in cofactor biosynthesis; coenzyme A biosynthesis; CoA from (R)-pantothenate: step 1/5. The polypeptide is Pantothenate kinase (Latilactobacillus sakei subsp. sakei (strain 23K) (Lactobacillus sakei subsp. sakei)).